The chain runs to 479 residues: Aspartyl/glutamyl-tRNA(Asn/Gln) amidotransferase subunit B (479 aa).

This sequence belongs to the GatB/GatE family. GatB subfamily. In terms of assembly, heterotrimer of A, B and C subunits.

It catalyses the reaction L-glutamyl-tRNA(Gln) + L-glutamine + ATP + H2O = L-glutaminyl-tRNA(Gln) + L-glutamate + ADP + phosphate + H(+). It carries out the reaction L-aspartyl-tRNA(Asn) + L-glutamine + ATP + H2O = L-asparaginyl-tRNA(Asn) + L-glutamate + ADP + phosphate + 2 H(+). In terms of biological role, allows the formation of correctly charged Asn-tRNA(Asn) or Gln-tRNA(Gln) through the transamidation of misacylated Asp-tRNA(Asn) or Glu-tRNA(Gln) in organisms which lack either or both of asparaginyl-tRNA or glutaminyl-tRNA synthetases. The reaction takes place in the presence of glutamine and ATP through an activated phospho-Asp-tRNA(Asn) or phospho-Glu-tRNA(Gln). In Streptococcus uberis (strain ATCC BAA-854 / 0140J), this protein is Aspartyl/glutamyl-tRNA(Asn/Gln) amidotransferase subunit B.